The sequence spans 404 residues: Probable tRNA sulfurtransferase (404 aa).

The THUMP domain maps to 60 to 165; that stretch reads QPIVEALKLV…DEAAYISYEE (106 aa). ATP contacts are provided by residues 183–184, 208–209, Arg265, Gly287, and Gln296; these read ML and HF.

Belongs to the ThiI family.

It is found in the cytoplasm. It carries out the reaction [ThiI sulfur-carrier protein]-S-sulfanyl-L-cysteine + a uridine in tRNA + 2 reduced [2Fe-2S]-[ferredoxin] + ATP + H(+) = [ThiI sulfur-carrier protein]-L-cysteine + a 4-thiouridine in tRNA + 2 oxidized [2Fe-2S]-[ferredoxin] + AMP + diphosphate. It catalyses the reaction [ThiS sulfur-carrier protein]-C-terminal Gly-Gly-AMP + S-sulfanyl-L-cysteinyl-[cysteine desulfurase] + AH2 = [ThiS sulfur-carrier protein]-C-terminal-Gly-aminoethanethioate + L-cysteinyl-[cysteine desulfurase] + A + AMP + 2 H(+). It functions in the pathway cofactor biosynthesis; thiamine diphosphate biosynthesis. Catalyzes the ATP-dependent transfer of a sulfur to tRNA to produce 4-thiouridine in position 8 of tRNAs, which functions as a near-UV photosensor. Also catalyzes the transfer of sulfur to the sulfur carrier protein ThiS, forming ThiS-thiocarboxylate. This is a step in the synthesis of thiazole, in the thiamine biosynthesis pathway. The sulfur is donated as persulfide by IscS. The polypeptide is Probable tRNA sulfurtransferase (Streptococcus pyogenes serotype M12 (strain MGAS2096)).